The sequence spans 477 residues: Protoporphyrinogen oxidase (477 aa).

Residues 9–14 (GGGISG), 34–35 (ES), tryptophan 42, 57–60 (GPRG), valine 257, alanine 449, and 454–456 (VAV) contribute to the FAD site.

The protein belongs to the protoporphyrinogen/coproporphyrinogen oxidase family. Protoporphyrinogen oxidase subfamily. As to quaternary structure, monomer. Homodimer. FAD is required as a cofactor. As to expression, expressed in heart, brain, placenta, lung, liver, skeletal muscle, kidney and pancreas.

The protein localises to the mitochondrion inner membrane. It carries out the reaction protoporphyrinogen IX + 3 O2 = protoporphyrin IX + 3 H2O2. Its pathway is porphyrin-containing compound metabolism; protoporphyrin-IX biosynthesis; protoporphyrin-IX from protoporphyrinogen-IX: step 1/1. Functionally, catalyzes the 6-electron oxidation of protoporphyrinogen-IX to form protoporphyrin-IX. The chain is Protoporphyrinogen oxidase (PPOX) from Homo sapiens (Human).